A 128-amino-acid chain; its full sequence is ARPKSDCEKHRESTEKTGTIMKLIPKCKENSDYEELQCYEDSKFCVCYDKKGHAASPISTKVKECGCYLKQKERKDSGRESAIIPQCEEDGKWAKKQLWEFNKSCWCVDEKGEQVGKIHHDCDSLKCE.

2 Thyroglobulin type-1 domains span residues 4-67 and 72-127; these read KSDC…ECGC and KERK…SLKC. 4 cysteine pairs are disulfide-bonded: Cys7-Cys27, Cys38-Cys45, Cys47-Cys67, and Cys107-Cys127.

Expressed by the venom gland.

It localises to the secreted. Functionally, cysteine proteinase inhibitor. The chain is U24-ctenitoxin-Pn1a from Phoneutria nigriventer (Brazilian armed spider).